We begin with the raw amino-acid sequence, 368 residues long: Flavanone 3-dioxygenase (368 aa).

One can recognise a Fe2OG dioxygenase domain in the interval 191 to 295 (CVDMDQKVIV…RMSIATFQNP (105 aa)). Fe cation is bound by residues histidine 218, aspartate 220, and histidine 276. Arginine 286 is a 2-oxoglutarate binding site.

It belongs to the iron/ascorbate-dependent oxidoreductase family. The cofactor is Fe(2+). L-ascorbate serves as cofactor.

The catalysed reaction is a (2S)-flavan-4-one + 2-oxoglutarate + O2 = a (2R,3R)-dihydroflavonol + succinate + CO2. It functions in the pathway secondary metabolite biosynthesis; flavonoid biosynthesis. In terms of biological role, involved in the conversion of (2S)-naringenin to (+)-(2R/3R)-dihydrokaempferol. The chain is Flavanone 3-dioxygenase (FHT) from Petroselinum crispum (Parsley).